We begin with the raw amino-acid sequence, 168 residues long: DOMON domain-containing protein Y73F4A.2 (168 aa).

The N-terminal stretch at 1–18 is a signal peptide; that stretch reads MFRSIAVLSALLFAFASA. Residues 26–143 form the DOMON domain; it reads SDFEVYWRFA…CQKWRFVKSG (118 aa). N-linked (GlcNAc...) asparagine glycosylation occurs at Asn-36. The interval 148–168 is disordered; the sequence is GQLTRNDKSPKEKKVCPMECN. Residues 152–168 show a composition bias toward basic and acidic residues; the sequence is RNDKSPKEKKVCPMECN.

The protein localises to the secreted. This Caenorhabditis elegans protein is DOMON domain-containing protein Y73F4A.2.